A 415-amino-acid chain; its full sequence is MLEQMGIAAKAASYKLALLSSGEKNRVLEKIADELEAQMESILSANVQDVEQARANGLSEAMLDRLTLTPARLKAIADDVRQVCNLADPVGQVIDGGLLDSGLRMERRRVPLGVVGVIYEARPNVTVDVASLCLKTGNAVILRGGKETYRTNAATVRVIQKALKACGLPEAAVQAIDNPDRSLVNEMLRMDKYIDMLIPRGGAGLHKLCREQSTIPVITGGIGVCHIFVDSSADIAPALKIIVNAKTQRPSTCNTVETLLVHQDIAERFLPALSKQMAESGVTLHGDETVMQLHGPAKLVPLKPEKLDNEFLSLDLNVVVVENMDGAIAHIREHGTQHSDAILTSDMHNAARFVNEVDSAAVYVNASTRFTDGGQFGLGAEVAVSTQKLHARGPMGLEALTTYKWIGFGDGTIRA.

Belongs to the gamma-glutamyl phosphate reductase family.

It localises to the cytoplasm. The catalysed reaction is L-glutamate 5-semialdehyde + phosphate + NADP(+) = L-glutamyl 5-phosphate + NADPH + H(+). It functions in the pathway amino-acid biosynthesis; L-proline biosynthesis; L-glutamate 5-semialdehyde from L-glutamate: step 2/2. Its function is as follows. Catalyzes the NADPH-dependent reduction of L-glutamate 5-phosphate into L-glutamate 5-semialdehyde and phosphate. The product spontaneously undergoes cyclization to form 1-pyrroline-5-carboxylate. This is Gamma-glutamyl phosphate reductase from Salmonella dublin (strain CT_02021853).